The primary structure comprises 577 residues: Maltase A1 (577 aa).

The first 19 residues, 1 to 19, serve as a signal peptide directing secretion; the sequence is MRPQSAACLLLAIVGFVGA. N-linked (GlcNAc...) asparagine glycans are attached at residues Asn-119 and Asn-151. The active-site Nucleophile is Asp-221. N-linked (GlcNAc...) asparagine glycosylation is present at Asn-244. The active-site Proton donor is the Glu-297. N-linked (GlcNAc...) asparagine glycans are attached at residues Asn-315 and Asn-331.

The protein belongs to the glycosyl hydrolase 13 family.

The enzyme catalyses Hydrolysis of terminal, non-reducing (1-&gt;4)-linked alpha-D-glucose residues with release of alpha-D-glucose.. This chain is Maltase A1 (Mal-A1), found in Drosophila melanogaster (Fruit fly).